The following is a 725-amino-acid chain: MRALSLASLIGIASAACPYMTGELERRDTGTDDATAATEEFLSQYYMADNDTFLTSDVGGPIEDQNSLQVGDRGPTLLEDFIFRQKIQRFDHERVPERAVHARGVGAHGVFTSYGDYSNITAASFLGAEGKETPVFVRFSTVAGSRGSSDLARDVHGFATRFYTDEGNFDIVGNNIPVFFIQDAILFPDLIHAVKPRGDNEIPQAATAHDSAWDFFSQQPSSLHTLLWAMSGHGIPRSLRHVDGFGIHTFRFVTDNGDSKLVKFHWKSLQGKASMVWEEAQQVSGKNPDFMRQDLFEAIEAGRYPEWELGVQIMDEEDQLKFGFDLFDPTKIVPEEYVPITKLGKMTLNRNPRNYFAETEQVMFQPGHIVRGVDFTEDPLLQGRLFSYLDTQLNRHGGPNFEQLPINQPRVPVHNNNRDGAGQMFIPLNPNAYSPNTLNKGSPKQANQTVGKGFFTAPGRESTGRFTRAVSPSFEDVWSQPRLFYNSLTPAEQQFVVDAIRFENSNVKSSVVRNNVIIQLNRVSNDLARRVARAIGVEEPEADPTYYHNNKTTDVGTFGQKLKKLDGLKVGFLASVETPASIEAASELSKQLSEDGVDVVVVAERLSDGVDQTYSGSDAIQFDAVIVAPGAEGLFSTFSFTAPSNATSSSTLFPAGRPLQIVIDGFRFGKPVGAVGSAATALKNAGIQTSRDGVYVDKSVTSGFVDGIKDGLRTFKFLDRFKLDH.

Residues 1 to 15 (MRALSLASLIGIASA) form the signal peptide. A propeptide spanning residues 16–27 (ACPYMTGELERR) is cleaved from the precursor. An N-linked (GlcNAc...) asparagine glycan is attached at N50. Residue H101 is part of the active site. N-linked (GlcNAc...) asparagine glycosylation is present at N119. Residue N174 is part of the active site. Residue Y388 coordinates heme. N-linked (GlcNAc...) asparagine glycans are attached at residues N447, N550, and N645.

It belongs to the catalase family. Homotetramer. The cofactor is heme.

It is found in the secreted. It carries out the reaction 2 H2O2 = O2 + 2 H2O. Occurs in almost all aerobically respiring organisms and serves to protect cells from the toxic effects of hydrogen peroxide through its degradation into water and oxygen. This Aspergillus oryzae (strain ATCC 42149 / RIB 40) (Yellow koji mold) protein is Catalase B (catB).